The chain runs to 165 residues: Phosphopantetheine adenylyltransferase (165 aa).

Serine 9 is a substrate binding site. Residues 9 to 10 (SF) and histidine 17 each bind ATP. Lysine 41, isoleucine 75, and arginine 89 together coordinate substrate. ATP-binding positions include 90–92 (GVR), glutamate 100, and 125–131 (YLFVRSD).

This sequence belongs to the bacterial CoaD family. Homohexamer. It depends on Mg(2+) as a cofactor.

The protein resides in the cytoplasm. The catalysed reaction is (R)-4'-phosphopantetheine + ATP + H(+) = 3'-dephospho-CoA + diphosphate. It functions in the pathway cofactor biosynthesis; coenzyme A biosynthesis; CoA from (R)-pantothenate: step 4/5. Its function is as follows. Reversibly transfers an adenylyl group from ATP to 4'-phosphopantetheine, yielding dephospho-CoA (dPCoA) and pyrophosphate. The polypeptide is Phosphopantetheine adenylyltransferase (Borrelia turicatae (strain 91E135)).